The primary structure comprises 356 residues: 4-hydroxybenzoate polyprenyltransferase, mitochondrial (356 aa).

Residues 1–44 (MITRSIGIARRSNSINCIVGSNTSTSYSLDESTKRWISTSTKQP) constitute a mitochondrion transit peptide. 6 helical membrane-spanning segments follow: residues 71 to 91 (VDKP…IAMA), 93 to 113 (PAGQ…AFLM), 150 to 170 (AIGL…QLNW), 195 to 215 (WPQF…WCAL), 269 to 289 (WLSA…IASD), and 332 to 352 (IILF…QILI).

This sequence belongs to the UbiA prenyltransferase family. The cofactor is Mg(2+).

The protein resides in the mitochondrion inner membrane. The enzyme catalyses an all-trans-polyprenyl diphosphate + 4-hydroxybenzoate = a 4-hydroxy-3-(all-trans-polyprenyl)benzoate + diphosphate. It participates in cofactor biosynthesis; ubiquinone biosynthesis. Functionally, catalyzes the prenylation of para-hydroxybenzoate (PHB) with an all-trans polyprenyl group. Mediates the second step in the final reaction sequence of coenzyme Q (CoQ) biosynthesis, which is the condensation of the polyisoprenoid side chain with PHB, generating the first membrane-bound Q intermediate. The sequence is that of 4-hydroxybenzoate polyprenyltransferase, mitochondrial (coq-2) from Caenorhabditis elegans.